The primary structure comprises 290 residues: Glycine--tRNA ligase alpha subunit (290 aa).

Belongs to the class-II aminoacyl-tRNA synthetase family. Tetramer of two alpha and two beta subunits.

The protein resides in the cytoplasm. It catalyses the reaction tRNA(Gly) + glycine + ATP = glycyl-tRNA(Gly) + AMP + diphosphate. The chain is Glycine--tRNA ligase alpha subunit from Prochlorococcus marinus (strain NATL1A).